We begin with the raw amino-acid sequence, 81 residues long: Photosystem I iron-sulfur center (81 aa).

2 consecutive 4Fe-4S ferredoxin-type domains span residues 2–31 and 39–68; these read SHSV…MVAW and IASA…VRVY. [4Fe-4S] cluster is bound by residues Cys11, Cys14, Cys17, Cys21, Cys48, Cys51, Cys54, and Cys58.

As to quaternary structure, the eukaryotic PSI reaction center is composed of at least 11 subunits. [4Fe-4S] cluster serves as cofactor.

It localises to the plastid. It is found in the chloroplast thylakoid membrane. The enzyme catalyses reduced [plastocyanin] + hnu + oxidized [2Fe-2S]-[ferredoxin] = oxidized [plastocyanin] + reduced [2Fe-2S]-[ferredoxin]. In terms of biological role, apoprotein for the two 4Fe-4S centers FA and FB of photosystem I (PSI); essential for photochemical activity. FB is the terminal electron acceptor of PSI, donating electrons to ferredoxin. The C-terminus interacts with PsaA/B/D and helps assemble the protein into the PSI complex. Required for binding of PsaD and PsaE to PSI. PSI is a plastocyanin/cytochrome c6-ferredoxin oxidoreductase, converting photonic excitation into a charge separation, which transfers an electron from the donor P700 chlorophyll pair to the spectroscopically characterized acceptors A0, A1, FX, FA and FB in turn. This chain is Photosystem I iron-sulfur center, found in Guillardia theta (Cryptophyte).